A 174-amino-acid polypeptide reads, in one-letter code: Extracellular cysteine protease (174 aa).

Active-site residues include Cys24, His120, and Asn141.

The protein belongs to the peptidase C47 family. Post-translationally, proteolytically cleaved.

The protein localises to the secreted. It is found in the cell wall. With respect to regulation, inhibited by heavy metal ions such as Zn(2+) or Ni(2+), iodoacetamide, N-ethylmaleimide, leupeptin, SDS and E-64. Also inhibited by chloromethylketones TPCK and TLCK and by human plasma inhibitor alpha-2-macroglobulin. Stimulated by L-cysteine. Cysteine protease able to cleave elastin, insulin, myoglobin, fibronectin, fibrinogen, HMW-kininogen, alpha-1-protease inhibitor and alpha-1-antitrypsin. Along with other extracellular proteases may contribute to the colonization and infection of human tissues. The polypeptide is Extracellular cysteine protease (ecpA) (Staphylococcus epidermidis).